Here is a 403-residue protein sequence, read N- to C-terminus: ATP phosphoribosyltransferase regulatory subunit (403 aa).

The protein belongs to the class-II aminoacyl-tRNA synthetase family. HisZ subfamily. Heteromultimer composed of HisG and HisZ subunits.

It is found in the cytoplasm. It functions in the pathway amino-acid biosynthesis; L-histidine biosynthesis; L-histidine from 5-phospho-alpha-D-ribose 1-diphosphate: step 1/9. In terms of biological role, required for the first step of histidine biosynthesis. May allow the feedback regulation of ATP phosphoribosyltransferase activity by histidine. This is ATP phosphoribosyltransferase regulatory subunit from Nostoc punctiforme (strain ATCC 29133 / PCC 73102).